The chain runs to 303 residues: 2-dehydropantoate 2-reductase (303 aa).

NADP(+) contacts are provided by residues glycine 7–glycine 12, lysine 78, asparagine 103, and alanine 129. Catalysis depends on lysine 185, which acts as the Proton donor. Substrate contacts are provided by residues lysine 185, asparagine 189, asparagine 193, asparagine 203, and asparagine 252 to serine 255. Glutamate 267 contributes to the NADP(+) binding site.

The protein belongs to the ketopantoate reductase family.

Its subcellular location is the cytoplasm. The enzyme catalyses (R)-pantoate + NAD(+) = 2-dehydropantoate + NADH + H(+). The catalysed reaction is (R)-pantoate + NADP(+) = 2-dehydropantoate + NADPH + H(+). Its pathway is cofactor biosynthesis; coenzyme A biosynthesis. Catalyzes the NAD(P)H-dependent reduction of ketopantoate into pantoic acid. The chain is 2-dehydropantoate 2-reductase from Halobacterium salinarum (strain ATCC 700922 / JCM 11081 / NRC-1) (Halobacterium halobium).